A 211-amino-acid polypeptide reads, in one-letter code: Peptidyl-prolyl cis-trans isomerase FKBP14 (211 aa).

Positions 1–19 are cleaved as a signal peptide; the sequence is MRLFLWNAVLTLFVTSLIG. A disulfide bridge links cysteine 38 with cysteine 96. The region spanning 45–135 is the PPIase FKBP-type domain; sequence GDLMLVHYEG…IFNIDLLEIR (91 aa). Positions 135-170 constitute an EF-hand 1 domain; sequence RNGPRSHESFQEMDLNDDWKLSKDEVKAYLKKEFEK. Ca(2+) is bound by residues aspartate 148, asparagine 150, aspartate 152, lysine 154, and glutamate 159. Asparagine 176 carries an N-linked (GlcNAc...) asparagine glycan. An EF-hand 2 domain is found at 179–211; that stretch reads HHDALVEDIFDKEDEDKDGFISAREFTYKHDEL. Residues aspartate 192, aspartate 194, aspartate 196, phenylalanine 198, and glutamate 203 each contribute to the Ca(2+) site. The short motif at 208-211 is the Prevents secretion from ER element; it reads HDEL.

Monomer. Homodimer. Interacts with type III, type IV and type X collagens.

The protein resides in the endoplasmic reticulum lumen. The catalysed reaction is [protein]-peptidylproline (omega=180) = [protein]-peptidylproline (omega=0). Inhibited by tacrolimus/FK506. Its function is as follows. PPIase which accelerates the folding of proteins during protein synthesis. Has a preference for substrates containing 4-hydroxylproline modifications, including type III collagen. May also target type VI and type X collagens. The sequence is that of Peptidyl-prolyl cis-trans isomerase FKBP14 (FKBP14) from Homo sapiens (Human).